Reading from the N-terminus, the 185-residue chain is Large ribosomal subunit protein uL22 (185 aa).

The tract at residues 160-185 (VSHDDSQKKKVSKKKLARQKEKMMRE) is disordered.

The protein belongs to the universal ribosomal protein uL22 family.

In Maconellicoccus hirsutus (Pink hibiscus mealybug), this protein is Large ribosomal subunit protein uL22 (RpL17).